The sequence spans 130 residues: Mitochondrial pyruvate carrier 1 (130 aa).

Helical transmembrane passes span 23–45 and 55–77; these read LKYI…IAAI and ISGP…ALSV.

It belongs to the mitochondrial pyruvate carrier (MPC) (TC 2.A.105) family. The functional 150 kDa pyruvate import complex is a heteromer of MPC1 and either MPC2 or MPC3.

The protein resides in the mitochondrion. It localises to the mitochondrion inner membrane. Its function is as follows. Mediates the uptake of pyruvate into mitochondria. The chain is Mitochondrial pyruvate carrier 1 from Saccharomyces cerevisiae (strain ATCC 204508 / S288c) (Baker's yeast).